The primary structure comprises 96 residues: UPF0298 protein LCA_1075 (96 aa).

The protein belongs to the UPF0298 family.

Its subcellular location is the cytoplasm. This Latilactobacillus sakei subsp. sakei (strain 23K) (Lactobacillus sakei subsp. sakei) protein is UPF0298 protein LCA_1075.